We begin with the raw amino-acid sequence, 430 residues long: Adenylosuccinate synthetase (430 aa).

GTP contacts are provided by residues 12–18 and 40–42; these read GDEGKGK and GHT. The active-site Proton acceptor is the Asp13. Residues Asp13 and Gly40 each contribute to the Mg(2+) site. IMP-binding positions include 13 to 16, 38 to 41, Thr129, Arg143, Gln223, Thr238, and Arg302; these read DEGK and NAGH. His41 functions as the Proton donor in the catalytic mechanism. 298–304 lines the substrate pocket; it reads TTTGRPR. GTP-binding positions include Arg304, 330 to 332, and 412 to 414; these read KLD and SVG.

It belongs to the adenylosuccinate synthetase family. In terms of assembly, homodimer. Requires Mg(2+) as cofactor.

The protein localises to the cytoplasm. It carries out the reaction IMP + L-aspartate + GTP = N(6)-(1,2-dicarboxyethyl)-AMP + GDP + phosphate + 2 H(+). It functions in the pathway purine metabolism; AMP biosynthesis via de novo pathway; AMP from IMP: step 1/2. In terms of biological role, plays an important role in the de novo pathway of purine nucleotide biosynthesis. Catalyzes the first committed step in the biosynthesis of AMP from IMP. The chain is Adenylosuccinate synthetase from Desulforudis audaxviator (strain MP104C).